The following is a 204-amino-acid chain: INSIG protein homolog (204 aa).

The next 5 helical transmembrane spans lie at 5–27 (ISEA…HSHV), 47–64 (FWFP…AELR), 76–97 (ARQA…ALVH), 101–118 (VVPV…TWCV), and 124–145 (GAAC…LVQL). Residue H26 coordinates a 1,2-diacyl-sn-glycerol. Y150 provides a ligand contact to a 1,2-diacyl-sn-glycerol. The chain crosses the membrane as a helical span at residues 162–179 (PFLAPLYFAFGVVAALLG).

The protein belongs to the INSIG family. Homotrimer.

Its subcellular location is the membrane. Functionally, diacylglycerol-binding protein. The chain is INSIG protein homolog from Mycolicibacterium vanbaalenii (strain DSM 7251 / JCM 13017 / BCRC 16820 / KCTC 9966 / NRRL B-24157 / PYR-1) (Mycobacterium vanbaalenii).